Reading from the N-terminus, the 512-residue chain is MEELKGYLEKSRSKQQHFLYPLLFQEYIFVLAHDHGLNVNGSIFYEPAEISGYDKKFSSLLVKRLITRMYQQNYLINSVNDSNQNRFVGHNKNFDSQMISEGFAVIVEIPFSLRLVSSLEEKKEIQKSQNLRSIHSIFPFFEDKLSHLICVLDILIPYPVHLEILVQILQCWIQDVPSLHLLRFFFHEYNNWSNLITPKKSNYYGFSKENPRLFLFLYNSYVVECESIFVFLRKQSSYLRSTSSGTFLERTHFHEKIEQHLVVLCCNDFQKTLWLFKDPFMHYVRYQGKSILASKGTRFLMKKWKSYFVNFWQCHFHFWSQSCRIHINQFPNFSLHFLGYLSSVPINPSAVKSQMLENSFLIDTVTKKFETLVPIISMIGSLSKAKFCNVSGNPISKPVWADLSDSDIIDRFGRICRNLSHYYSGSSKKQSLYRIKYILRLSCARTLARKHKSTVRAFLQRLGSEFLEEFFTEEEKVLSLILPRISYPLHKLYRERIWYLDIIRINDLVNHL.

Belongs to the intron maturase 2 family. MatK subfamily.

The protein localises to the plastid. The protein resides in the chloroplast. Its function is as follows. Usually encoded in the trnK tRNA gene intron. Probably assists in splicing its own and other chloroplast group II introns. This is Maturase K from Filarum manserichense.